The sequence spans 1004 residues: Hyaluronate lyase HylB (1004 aa).

The first 29 residues, 1 to 29, serve as a signal peptide directing secretion; it reads MKNRKIWVMLVGLFTALTNGFMGTTLTFA. Catalysis depends on residues His-468, Tyr-477, and Arg-531.

This sequence belongs to the polysaccharide lyase 8 family.

The protein resides in the secreted. It carries out the reaction [hyaluronan](n) = n 3-(4-deoxy-beta-D-gluc-4-enuronosyl)-N-acetyl-D-glucosamine + H2O. It catalyses the reaction Eliminative degradation of polysaccharides containing 1,4-beta-D-hexosaminyl and 1,3-beta-D-glucuronosyl linkages to disaccharides containing 4-deoxy-beta-D-gluc-4-enuronosyl groups.. In terms of biological role, degrades hyaluronic acid (HA) and chondroitin sulfate (CS) A in vitro. Is not active against heparin sodium salt (HS). Involved in the pathogenesis of vancomycin-resistant E.faecalis infections. Contributes to attenuation of the lipopolysaccharide (LPS)-mediated nuclear factor (NF)-kappa-B activation assayed in the mouse RAW-Blue reporter macrophages. This is Hyaluronate lyase HylB from Enterococcus faecalis (strain ATCC 700802 / V583).